A 507-amino-acid polypeptide reads, in one-letter code: FSD1-like protein (507 aa).

The stretch at 70-109 forms a coiled coil; it reads KQEQVRKSQELQSQLSQCNNALENSEELLEFATRSLDIKE. One can recognise a COS domain in the interval 105–162; the sequence is LDIKEPEEFSKAARQIKDRVTMASAFRLSLKPKVSDNMTHLMVDFSQERQMLQTLKFL. The region spanning 164-268 is the Fibronectin type-III domain; it reads VPKAPEIDPV…DPVTLETRAL (105 aa). Positions 291–484 constitute a B30.2/SPRY domain; that stretch reads DPTGGKGQES…LSTGMQVPSA (194 aa). Residues 292–345 form a disordered region; sequence PTGGKGQESKIKGKENKGSVHVTSLKKHTSGTPSPKRTSVGSRPPAVRGSRDRF. Residues 298 to 309 show a composition bias toward basic and acidic residues; the sequence is QESKIKGKENKG. Residues 321–332 show a composition bias toward polar residues; that stretch reads SGTPSPKRTSVG. 2 positions are modified to phosphoserine: Ser-498 and Ser-501.

The chain is FSD1-like protein (Fsd1l) from Mus musculus (Mouse).